The chain runs to 188 residues: Adenine phosphoribosyltransferase (188 aa).

The protein belongs to the purine/pyrimidine phosphoribosyltransferase family. In terms of assembly, homodimer.

It localises to the cytoplasm. The enzyme catalyses AMP + diphosphate = 5-phospho-alpha-D-ribose 1-diphosphate + adenine. The protein operates within purine metabolism; AMP biosynthesis via salvage pathway; AMP from adenine: step 1/1. In terms of biological role, catalyzes a salvage reaction resulting in the formation of AMP, that is energically less costly than de novo synthesis. This is Adenine phosphoribosyltransferase from Burkholderia thailandensis (strain ATCC 700388 / DSM 13276 / CCUG 48851 / CIP 106301 / E264).